Consider the following 438-residue polypeptide: Aspartate aminotransferase, cytoplasmic (438 aa).

Gly-73, Trp-167, and Asn-220 together coordinate L-aspartate. An N6-(pyridoxal phosphate)lysine modification is found at Lys-284. Arg-412 is a binding site for L-aspartate.

It belongs to the class-I pyridoxal-phosphate-dependent aminotransferase family. Homodimer. Pyridoxal 5'-phosphate serves as cofactor.

It localises to the cytoplasm. It carries out the reaction L-aspartate + 2-oxoglutarate = oxaloacetate + L-glutamate. Its function is as follows. Plays a key role in amino acid metabolism. The chain is Aspartate aminotransferase, cytoplasmic (aatB) from Dictyostelium discoideum (Social amoeba).